The following is a 365-amino-acid chain: Aminomethyltransferase (365 aa).

This sequence belongs to the GcvT family. As to quaternary structure, the glycine cleavage system is composed of four proteins: P, T, L and H.

The catalysed reaction is N(6)-[(R)-S(8)-aminomethyldihydrolipoyl]-L-lysyl-[protein] + (6S)-5,6,7,8-tetrahydrofolate = N(6)-[(R)-dihydrolipoyl]-L-lysyl-[protein] + (6R)-5,10-methylene-5,6,7,8-tetrahydrofolate + NH4(+). The glycine cleavage system catalyzes the degradation of glycine. This chain is Aminomethyltransferase, found in Chlorobaculum tepidum (strain ATCC 49652 / DSM 12025 / NBRC 103806 / TLS) (Chlorobium tepidum).